The primary structure comprises 212 residues: Uridine kinase (212 aa).

13 to 20 provides a ligand contact to ATP; sequence GGSGSGKT.

It belongs to the uridine kinase family.

The protein localises to the cytoplasm. It catalyses the reaction uridine + ATP = UMP + ADP + H(+). It carries out the reaction cytidine + ATP = CMP + ADP + H(+). The protein operates within pyrimidine metabolism; CTP biosynthesis via salvage pathway; CTP from cytidine: step 1/3. It functions in the pathway pyrimidine metabolism; UMP biosynthesis via salvage pathway; UMP from uridine: step 1/1. This is Uridine kinase from Bacillus cereus (strain G9842).